We begin with the raw amino-acid sequence, 105 residues long: MIPGEIQVAAGDIELNSGRETVSVSVANHGDRPVQVGSHYHFYEVNDALVFDRAPTLGFRLDIPAGTAVRFEPGQARTVQLVAYAGKREVYGFQGKVMGALEGRA.

The protein belongs to the urease beta subunit family. Heterotrimer of UreA (gamma), UreB (beta) and UreC (alpha) subunits. Three heterotrimers associate to form the active enzyme.

It localises to the cytoplasm. It carries out the reaction urea + 2 H2O + H(+) = hydrogencarbonate + 2 NH4(+). It participates in nitrogen metabolism; urea degradation; CO(2) and NH(3) from urea (urease route): step 1/1. The protein is Urease subunit beta of Pseudomonas putida (strain ATCC 47054 / DSM 6125 / CFBP 8728 / NCIMB 11950 / KT2440).